A 567-amino-acid chain; its full sequence is Proline--tRNA ligase (567 aa).

Belongs to the class-II aminoacyl-tRNA synthetase family. ProS type 1 subfamily. Homodimer.

It is found in the cytoplasm. It catalyses the reaction tRNA(Pro) + L-proline + ATP = L-prolyl-tRNA(Pro) + AMP + diphosphate. Functionally, catalyzes the attachment of proline to tRNA(Pro) in a two-step reaction: proline is first activated by ATP to form Pro-AMP and then transferred to the acceptor end of tRNA(Pro). As ProRS can inadvertently accommodate and process non-cognate amino acids such as alanine and cysteine, to avoid such errors it has two additional distinct editing activities against alanine. One activity is designated as 'pretransfer' editing and involves the tRNA(Pro)-independent hydrolysis of activated Ala-AMP. The other activity is designated 'posttransfer' editing and involves deacylation of mischarged Ala-tRNA(Pro). The misacylated Cys-tRNA(Pro) is not edited by ProRS. This chain is Proline--tRNA ligase, found in Staphylococcus aureus (strain COL).